The following is a 448-amino-acid chain: DNA repair protein RadA (448 aa).

The C4-type zinc finger occupies 10-27 (CQHCGFTSPKWLGKCVQC). An ATP-binding site is contributed by 96-103 (GSPGVGKS). The RadA KNRFG motif motif lies at 253–257 (KNRFG). Positions 351-448 (DVFINVSGGI…NAVGKIVEWM (98 aa)) are lon-protease-like.

This sequence belongs to the RecA family. RadA subfamily.

Its function is as follows. DNA-dependent ATPase involved in processing of recombination intermediates, plays a role in repairing DNA breaks. Stimulates the branch migration of RecA-mediated strand transfer reactions, allowing the 3' invading strand to extend heteroduplex DNA faster. Binds ssDNA in the presence of ADP but not other nucleotides, has ATPase activity that is stimulated by ssDNA and various branched DNA structures, but inhibited by SSB. Does not have RecA's homology-searching function. This Helicobacter pylori (strain ATCC 700392 / 26695) (Campylobacter pylori) protein is DNA repair protein RadA.